The chain runs to 360 residues: 3-isopropylmalate dehydrogenase (360 aa).

Position 76-89 (76-89 (GPKWEPLDYSLRPE)) interacts with NAD(+). Residues Arg-96, Arg-106, Arg-134, and Asp-224 each coordinate substrate. Mg(2+)-binding residues include Asp-224, Asp-248, and Asp-252. An NAD(+)-binding site is contributed by 282 to 294 (GSAPDIAGRGIAN).

Belongs to the isocitrate and isopropylmalate dehydrogenases family. LeuB type 1 subfamily. Homodimer. It depends on Mg(2+) as a cofactor. Mn(2+) is required as a cofactor.

The protein localises to the cytoplasm. The catalysed reaction is (2R,3S)-3-isopropylmalate + NAD(+) = 4-methyl-2-oxopentanoate + CO2 + NADH. The protein operates within amino-acid biosynthesis; L-leucine biosynthesis; L-leucine from 3-methyl-2-oxobutanoate: step 3/4. In terms of biological role, catalyzes the oxidation of 3-carboxy-2-hydroxy-4-methylpentanoate (3-isopropylmalate) to 3-carboxy-4-methyl-2-oxopentanoate. The product decarboxylates to 4-methyl-2 oxopentanoate. The polypeptide is 3-isopropylmalate dehydrogenase (Methylococcus capsulatus (strain ATCC 33009 / NCIMB 11132 / Bath)).